The chain runs to 917 residues: Protein translocase subunit SecA (917 aa).

ATP-binding positions include glutamine 87, 105–109 (GEGKT), and aspartate 516. Residues cysteine 901, cysteine 903, cysteine 912, and histidine 913 each contribute to the Zn(2+) site.

This sequence belongs to the SecA family. Monomer and homodimer. Part of the essential Sec protein translocation apparatus which comprises SecA, SecYEG and auxiliary proteins SecDF-YajC and YidC. Zn(2+) is required as a cofactor.

It localises to the cell inner membrane. Its subcellular location is the cytoplasm. The catalysed reaction is ATP + H2O + cellular proteinSide 1 = ADP + phosphate + cellular proteinSide 2.. Its function is as follows. Part of the Sec protein translocase complex. Interacts with the SecYEG preprotein conducting channel. Has a central role in coupling the hydrolysis of ATP to the transfer of proteins into and across the cell membrane, serving both as a receptor for the preprotein-SecB complex and as an ATP-driven molecular motor driving the stepwise translocation of polypeptide chains across the membrane. The sequence is that of Protein translocase subunit SecA from Acidovorax sp. (strain JS42).